A 696-amino-acid polypeptide reads, in one-letter code: MGNGMCSRKQKRIFQTLLLLTVVFGFLYGAMLYYELQTQLRKAEAVALKYQQHQESLSAQLQVVYEHRSRLEKSLQKERLEHKKAKEDFLVYKLEAQETLNKGRQDSNSRYSALNVQHQMLKSQHEELKKQHSDLEEEHRKQGEDFSRTFNDHKQKYLQLQQEKEQELSKLKETVYNLREENRQLRKAHQDIHTQLQDVKQQHKNLLSEHEQLVVTLEDHKSALAAAQTQVAEYKQLKDTLNRIPSLRKPDPAEQQNVTQVAHSPQGYNTAREKPTREVQEVSRNNDVWQNHEAVPGRAEDTKLYAPTHKEAEFQAPPEPIQQEVERREPEEHQVEEEHRKALEEEEMEQVGQAEHLEEEHDPSPEEQDREWKEQHEQREAANLLEGHARAEVYPSAKPMIKFQSPYEEQLEQQRLAVQQVEEAQQLREHQEALHQQRLQGHLLRQQEQQQQQVAREMALQRQAELEEGRPQHQEQLRQQAHYDAMDNDIVQGAEDQGIQGEEGAYERDNQHQDEAEGDPGNRHEPREQGPREADPESEADRAAVEDINPADDPNNQGEDEFEEAEQVREENLPDENEEQKQSNQKQENTEVEEHLVMAGNPDQQEDNVDEQYQEEAEEEVQEDLTEEKKRELEHNAEETYGENDENTDDKNNDGEEQEVRDDNRPKGREEHYEEEEEEEEDGAAVAEKSHRRAEM.

A lipid anchor (N-myristoyl glycine) is attached at glycine 2. Residues 2–12 (GNGMCSRKQKR) are Cytoplasmic-facing. The chain crosses the membrane as a helical; Signal-anchor for type II membrane protein span at residues 13–33 (IFQTLLLLTVVFGFLYGAMLY). Residues 34–696 (YELQTQLRKA…AEKSHRRAEM (663 aa)) lie on the Lumenal side of the membrane. Positions 35–244 (ELQTQLRKAE…KQLKDTLNRI (210 aa)) form a coiled coil. The segment at 38 to 107 (TQLRKAEAVA…ETLNKGRQDS (70 aa)) is golgi targeting. Positions 80-175 (LEHKKAKEDF…QELSKLKETV (96 aa)) are endosome targeting. Disordered stretches follow at residues 122–145 (KSQHEELKKQHSDLEEEHRKQGED), 244–391 (IPSL…HARA), and 427–696 (LREH…RAEM). Residues 123–145 (SQHEELKKQHSDLEEEHRKQGED) are compositionally biased toward basic and acidic residues. Positions 176–248 (YNLREENRQL…DTLNRIPSLR (73 aa)) are golgi targeting. Residues 254–269 (EQQNVTQVAHSPQGYN) are compositionally biased toward polar residues. The N-linked (GlcNAc...) asparagine glycan is linked to asparagine 257. 5 stretches are compositionally biased toward basic and acidic residues: residues 271 to 281 (AREKPTREVQE), 298 to 313 (RAEDTKLYAPTHKEAE), 324 to 343 (EVERREPEEHQVEEEHRKAL), 355 to 364 (EHLEEEHDPS), and 370 to 380 (REWKEQHEQRE). Serine 364 carries the phosphoserine modification. Low complexity predominate over residues 436 to 453 (QQRLQGHLLRQQEQQQQQ). 2 stretches are compositionally biased toward basic and acidic residues: residues 464 to 476 (AELEEGRPQHQEQ) and 505 to 545 (AYER…RAAV). Phosphoserine is present on serine 538. Residues 604–626 (QQEDNVDEQYQEEAEEEVQEDLT) are compositionally biased toward acidic residues. Phosphotyrosine is present on tyrosine 613. Threonine 626 carries the phosphothreonine modification. Composition is skewed to basic and acidic residues over residues 627-638 (EEKKRELEHNAE) and 661-672 (RDDNRPKGREEH). Tyrosine 673 bears the Phosphotyrosine mark. The span at 673–683 (YEEEEEEEEDG) shows a compositional bias: acidic residues.

This sequence belongs to the GOLIM4 family. Post-translationally, phosphorylated probably by c-AMP-dependent kinases in its lumenal part. In terms of processing, O-glycosylated; modified by sialic acid residues. N-glycosylated; N-glycans are probably of the complex type and modified by sialic acid residues.

It is found in the golgi apparatus. It localises to the golgi stack membrane. The protein localises to the endosome membrane. The protein resides in the membrane. Plays a role in endosome to Golgi protein trafficking; mediates protein transport along the late endosome-bypass pathway from the early endosome to the Golgi. The polypeptide is Golgi integral membrane protein 4 (GOLIM4) (Homo sapiens (Human)).